The primary structure comprises 371 residues: Phosphate acyltransferase (371 aa).

The protein belongs to the PlsX family. In terms of assembly, homodimer. Probably interacts with PlsY.

The protein localises to the cytoplasm. The catalysed reaction is a fatty acyl-[ACP] + phosphate = an acyl phosphate + holo-[ACP]. It participates in lipid metabolism; phospholipid metabolism. Functionally, catalyzes the reversible formation of acyl-phosphate (acyl-PO(4)) from acyl-[acyl-carrier-protein] (acyl-ACP). This enzyme utilizes acyl-ACP as fatty acyl donor, but not acyl-CoA. The chain is Phosphate acyltransferase from Ruegeria pomeroyi (strain ATCC 700808 / DSM 15171 / DSS-3) (Silicibacter pomeroyi).